We begin with the raw amino-acid sequence, 92 residues long: Long neurotoxin 1 (92 aa).

The N-terminal stretch at 1 to 21 is a signal peptide; that stretch reads MKTLLLTLVVVTIVCLDLGYT. 4 cysteine pairs are disulfide-bonded: C24/C42, C35/C63, C67/C79, and C80/C85.

Belongs to the three-finger toxin family. Long-chain subfamily. Type II alpha-neurotoxin sub-subfamily. Expressed by the venom gland.

It is found in the secreted. Functionally, binds with high affinity to muscular (alpha-1/CHRNA1) and neuronal (alpha-7/CHRNA7) nicotinic acetylcholine receptor (nAChR) and inhibits acetylcholine from binding to the receptor, thereby impairing neuromuscular and neuronal transmission. This chain is Long neurotoxin 1, found in Oxyuranus scutellatus scutellatus (Australian taipan).